Consider the following 110-residue polypeptide: MLPFKTLALFLLTAVAEIVGCYLPWLWLRQGRSAWLLVPAAASLALFAWLLTLHPAATGRVYAAYGGVYVAVALVWLWTVDGVRPGPWDWLGVAVTLCGMAIIAFAPRGG.

A run of 4 helical transmembrane segments spans residues 7–27, 33–53, 63–83, and 86–106; these read LALFLLTAVAEIVGCYLPWLW, SAWLLVPAAASLALFAWLLTL, AAYGGVYVAVALVWLWTVDGV, and GPWDWLGVAVTLCGMAIIAFA.

This sequence belongs to the UPF0060 family.

It is found in the cell inner membrane. The protein is UPF0060 membrane protein Ajs_2087 of Acidovorax sp. (strain JS42).